We begin with the raw amino-acid sequence, 235 residues long: Isoprenyl transferase (235 aa).

Residue Asp21 is part of the active site. Asp21 is a Mg(2+) binding site. Substrate-binding positions include 22–25, Trp26, Lys34, His38, and 66–68; these read GNAR and SSE. Asn69 acts as the Proton acceptor in catalysis. Residues Trp70, Arg72, Arg183, and 189-191 each bind substrate; that span reads RIS. Glu202 is a binding site for Mg(2+).

This sequence belongs to the UPP synthase family. Homodimer. Mg(2+) serves as cofactor.

Its function is as follows. Catalyzes the condensation of isopentenyl diphosphate (IPP) with allylic pyrophosphates generating different type of terpenoids. This chain is Isoprenyl transferase, found in Rickettsia conorii (strain ATCC VR-613 / Malish 7).